We begin with the raw amino-acid sequence, 451 residues long: UDP-N-acetylmuramate--L-alanine ligase (451 aa).

110 to 116 (GTHGKTT) is an ATP binding site.

This sequence belongs to the MurCDEF family.

It localises to the cytoplasm. The enzyme catalyses UDP-N-acetyl-alpha-D-muramate + L-alanine + ATP = UDP-N-acetyl-alpha-D-muramoyl-L-alanine + ADP + phosphate + H(+). Its pathway is cell wall biogenesis; peptidoglycan biosynthesis. Cell wall formation. The sequence is that of UDP-N-acetylmuramate--L-alanine ligase from Francisella tularensis subsp. tularensis (strain SCHU S4 / Schu 4).